A 218-amino-acid polypeptide reads, in one-letter code: Deoxyribose-phosphate aldolase (218 aa).

D92 functions as the Proton donor/acceptor in the catalytic mechanism. The active-site Schiff-base intermediate with acetaldehyde is the K156. Residue K185 is the Proton donor/acceptor of the active site.

Belongs to the DeoC/FbaB aldolase family. DeoC type 1 subfamily.

Its subcellular location is the cytoplasm. It carries out the reaction 2-deoxy-D-ribose 5-phosphate = D-glyceraldehyde 3-phosphate + acetaldehyde. Its pathway is carbohydrate degradation; 2-deoxy-D-ribose 1-phosphate degradation; D-glyceraldehyde 3-phosphate and acetaldehyde from 2-deoxy-alpha-D-ribose 1-phosphate: step 2/2. Catalyzes a reversible aldol reaction between acetaldehyde and D-glyceraldehyde 3-phosphate to generate 2-deoxy-D-ribose 5-phosphate. This chain is Deoxyribose-phosphate aldolase, found in Desulfitobacterium hafniense (strain Y51).